The primary structure comprises 160 residues: Coat protein TP3 (160 aa).

It localises to the virion. The sequence is that of Coat protein TP3 from Thermoproteus tenax (TTV1).